A 452-amino-acid chain; its full sequence is Gamma conglutin 1 (452 aa).

An N-terminal signal peptide occupies residues 1–33; that stretch reads MAKNMAPILHILVISLSYSFLFVTSSSQNSQSL. In terms of domain architecture, Peptidase A1 spans 61–432; that stretch reads HWGNILKRTP…DLARSRVGFN (372 aa). 5 disulfides stabilise this stretch: C89–C179, C103–C116, C108–C134, C119–C129, and C353–C394. N-linked (GlcNAc...) asparagine glycosylation is present at N131.

Belongs to the peptidase A1 family. Two-subunit monomeric unit made of alpha and beta subunits coupled by disulfide bonds (at pH 4.5 and under non-reducing conditions). Monomeric alpha and beta subunits in reducing conditions. Can also form oligomers including dimer, tetramer and cyclic hexamer (trimer of dimers) (at pH &gt; 5.5). Component of globulins complexes which accumulate in seeds. Interacts with flavonoids (e.g. apigenin glucosides) present in globulins complexes. Glycosylated on alpha chain at Asn-131; identified N-glycans bound are Man(2)(Xyl)(Fuc)GlcNAc(2), Man(3)(Xyl)(Fuc)GlcNAc(2), GlcNAcMan(3)(Xyl)(Fuc)GlcNAc(2) and GlcNAc(2)Man(3)(Xyl)(Fuc)GlcNAc(2). Expressed in developing seeds and in the young roots and cotyledons of germinating seeds and young seedlings.

It is found in the secreted. The protein resides in the extracellular space. Functionally, sulfur-rich seed storage protein that remains undegraded at germination. The uncleaved form exhibits some inhibitory activity against GH11 xylanase from T.longibrachiatum, more at pH 7 than at pH 5.3, but not against GH12 xyloglucan-specific endoglucanase (XEG) from A.aculeatus. Binds to model phospholipid membranes containing dimyristoyl phosphatidylglycerol (DMPG), dioleoyl phosphatidic acid (DOPA) or mixture of dimyristoyl phosphatidylcholine and dimyristoyl phosphatidylglycerol (DMPC:DMPG), or mixture of dioleoyl phosphatidic acid and dioleoyl phosphatidylcholine (DOPC:DOPA). This chain is Gamma conglutin 1, found in Lupinus albus (White lupine).